Here is a 210-residue protein sequence, read N- to C-terminus: Two-component response regulator ORR7 (210 aa).

Residues 53–92 are disordered; that stretch reads VVPLHDNASAEDDDDDEEDDDEDDDDDDDEDDEEEAAPPY. Positions 61 to 88 are enriched in acidic residues; that stretch reads SAEDDDDDEEDDDEDDDDDDDEDDEEEA. One can recognise a Response regulatory domain in the interval 92–205; it reads YVMAVDDSSV…VRPADISRIT (114 aa). Asp142 carries the post-translational modification 4-aspartylphosphate.

This sequence belongs to the ARR family. Type-A subfamily. In terms of processing, two-component system major event consists of a His-to-Asp phosphorelay between a sensor histidine kinase (HK) and a response regulator (RR). In plants, the His-to-Asp phosphorelay involves an additional intermediate named Histidine-containing phosphotransfer protein (HPt). This multistep phosphorelay consists of a His-Asp-His-Asp sequential transfer of a phosphate group between first a His and an Asp of the HK protein, followed by the transfer to a conserved His of the HPt protein and finally the transfer to an Asp in the receiver domain of the RR protein.

Its function is as follows. Functions as a response regulator involved in His-to-Asp phosphorelay signal transduction system. Phosphorylation of the Asp residue in the receiver domain activates the ability of the protein to promote the transcription of target genes. Type-A response regulators seem to act as negative regulators of the cytokinin signaling. The polypeptide is Two-component response regulator ORR7 (Oryza sativa subsp. japonica (Rice)).